The following is a 450-amino-acid chain: UDP-N-acetylmuramoylalanine--D-glutamate ligase (450 aa).

119–125 is an ATP binding site; the sequence is GSNGKTT.

This sequence belongs to the MurCDEF family.

It localises to the cytoplasm. It catalyses the reaction UDP-N-acetyl-alpha-D-muramoyl-L-alanine + D-glutamate + ATP = UDP-N-acetyl-alpha-D-muramoyl-L-alanyl-D-glutamate + ADP + phosphate + H(+). Its pathway is cell wall biogenesis; peptidoglycan biosynthesis. Its function is as follows. Cell wall formation. Catalyzes the addition of glutamate to the nucleotide precursor UDP-N-acetylmuramoyl-L-alanine (UMA). This is UDP-N-acetylmuramoylalanine--D-glutamate ligase from Streptococcus pneumoniae (strain Hungary19A-6).